The following is a 337-amino-acid chain: Holliday junction branch migration complex subunit RuvB (337 aa).

Positions 1 to 179 are large ATPase domain (RuvB-L); the sequence is MTHQVSVLHQ…FSFTGRMSYY (179 aa). ATP is bound by residues Leu-18, Arg-19, Gly-60, Lys-63, Thr-64, Ser-65, 126 to 128, Arg-169, Tyr-179, and Arg-216; that span reads EDY. Position 64 (Thr-64) interacts with Mg(2+). The tract at residues 180 to 250 is small ATPAse domain (RuvB-S); that stretch reads SDEDLTTILK…VAEKALAMLL (71 aa). A head domain (RuvB-H) region spans residues 253–337; sequence DWGLNEIDIK…DNLQSLGEEK (85 aa). DNA contacts are provided by Lys-308 and Arg-313.

The protein belongs to the RuvB family. Homohexamer. Forms an RuvA(8)-RuvB(12)-Holliday junction (HJ) complex. HJ DNA is sandwiched between 2 RuvA tetramers; dsDNA enters through RuvA and exits via RuvB. An RuvB hexamer assembles on each DNA strand where it exits the tetramer. Each RuvB hexamer is contacted by two RuvA subunits (via domain III) on 2 adjacent RuvB subunits; this complex drives branch migration. In the full resolvosome a probable DNA-RuvA(4)-RuvB(12)-RuvC(2) complex forms which resolves the HJ.

It is found in the cytoplasm. The catalysed reaction is ATP + H2O = ADP + phosphate + H(+). Functionally, the RuvA-RuvB-RuvC complex processes Holliday junction (HJ) DNA during genetic recombination and DNA repair, while the RuvA-RuvB complex plays an important role in the rescue of blocked DNA replication forks via replication fork reversal (RFR). RuvA specifically binds to HJ cruciform DNA, conferring on it an open structure. The RuvB hexamer acts as an ATP-dependent pump, pulling dsDNA into and through the RuvAB complex. RuvB forms 2 homohexamers on either side of HJ DNA bound by 1 or 2 RuvA tetramers; 4 subunits per hexamer contact DNA at a time. Coordinated motions by a converter formed by DNA-disengaged RuvB subunits stimulates ATP hydrolysis and nucleotide exchange. Immobilization of the converter enables RuvB to convert the ATP-contained energy into a lever motion, pulling 2 nucleotides of DNA out of the RuvA tetramer per ATP hydrolyzed, thus driving DNA branch migration. The RuvB motors rotate together with the DNA substrate, which together with the progressing nucleotide cycle form the mechanistic basis for DNA recombination by continuous HJ branch migration. Branch migration allows RuvC to scan DNA until it finds its consensus sequence, where it cleaves and resolves cruciform DNA. The protein is Holliday junction branch migration complex subunit RuvB of Chlamydia caviae (strain ATCC VR-813 / DSM 19441 / 03DC25 / GPIC) (Chlamydophila caviae).